The sequence spans 493 residues: Cytochrome c-552 (493 aa).

A signal peptide spans 1-25 (MEKKLKSWQGWLLFCGAMAVVFVLG). His116 is a heme c binding site. Heme contacts are provided by Cys144, Cys147, and Lys148. Cys182, Cys185, His186, Cys224, Cys227, and His228 together coordinate heme c. The Ca(2+) site is built by Glu230, Tyr231, Lys276, and Gln278. Tyr231 contacts substrate. Position 279 (His279) interacts with substrate. Positions 290, 297, 300, 301, 315, 328, 331, 332, and 407 each coordinate heme c.

The protein belongs to the cytochrome c-552 family. Requires Ca(2+) as cofactor. Heme c serves as cofactor.

The protein resides in the periplasm. It catalyses the reaction 6 Fe(III)-[cytochrome c] + NH4(+) + 2 H2O = 6 Fe(II)-[cytochrome c] + nitrite + 8 H(+). The protein operates within nitrogen metabolism; nitrate reduction (assimilation). Functionally, catalyzes the reduction of nitrite to ammonia, consuming six electrons in the process. The chain is Cytochrome c-552 from Bacteroides fragilis (strain YCH46).